The chain runs to 254 residues: Imidazole glycerol phosphate synthase subunit HisF (254 aa).

Active-site residues include Asp12 and Asp131.

This sequence belongs to the HisA/HisF family. In terms of assembly, heterodimer of HisH and HisF.

It is found in the cytoplasm. It catalyses the reaction 5-[(5-phospho-1-deoxy-D-ribulos-1-ylimino)methylamino]-1-(5-phospho-beta-D-ribosyl)imidazole-4-carboxamide + L-glutamine = D-erythro-1-(imidazol-4-yl)glycerol 3-phosphate + 5-amino-1-(5-phospho-beta-D-ribosyl)imidazole-4-carboxamide + L-glutamate + H(+). It participates in amino-acid biosynthesis; L-histidine biosynthesis; L-histidine from 5-phospho-alpha-D-ribose 1-diphosphate: step 5/9. In terms of biological role, IGPS catalyzes the conversion of PRFAR and glutamine to IGP, AICAR and glutamate. The HisF subunit catalyzes the cyclization activity that produces IGP and AICAR from PRFAR using the ammonia provided by the HisH subunit. The polypeptide is Imidazole glycerol phosphate synthase subunit HisF (Kocuria rhizophila (strain ATCC 9341 / DSM 348 / NBRC 103217 / DC2201)).